The chain runs to 1196 residues: Beta/alpha-amylase (1196 aa).

The signal sequence occupies residues 1–35 (MTLYRSLWKKGCMLLLSLVLSLTAFIGSPSNTASA). Residues 36 to 454 (AVADDFQASV…IISKAKPDNN (419 aa)) are beta-amylase. Asp76 is a substrate binding site. Glu83 and Asp87 together coordinate Ca(2+). Positions 116 and 124 each coordinate substrate. A disulfide bridge links Cys118 with Cys126. Glu170 lines the Ca(2+) pocket. Residue Glu198 is the Proton donor of the active site. Lys314, His319, and Thr357 together coordinate substrate. The active-site Proton acceptor is the Glu394. Substrate is bound by residues 395 to 396 (NA) and Arg423. Repeats lie at residues 455–558 (GGTG…APAG) and 565–668 (GGTT…APSG). Over residues 544–553 (NSGNAGTITS) the composition is skewed to polar residues. Residues 544–566 (NSGNAGTITSGAPAGANPGDGGG) are disordered. The segment at 669 to 1196 (SVLSVVTSTY…APKEVKVFTK (528 aa)) is alpha-amylase.

The protein in the N-terminal section; belongs to the glycosyl hydrolase 14 family. It in the C-terminal section; belongs to the glycosyl hydrolase 13 family. It depends on Ca(2+) as a cofactor.

It localises to the secreted. It carries out the reaction Hydrolysis of (1-&gt;4)-alpha-D-glucosidic linkages in polysaccharides so as to remove successive maltose units from the non-reducing ends of the chains.. The enzyme catalyses Endohydrolysis of (1-&gt;4)-alpha-D-glucosidic linkages in polysaccharides containing three or more (1-&gt;4)-alpha-linked D-glucose units.. Its function is as follows. The precursor protein is proteolytically cleaved to produce multiform beta-amylases and a 48 kDa alpha-amylase after secretion. The protein is Beta/alpha-amylase of Paenibacillus polymyxa (Bacillus polymyxa).